The chain runs to 379 residues: Cytochrome b (379 aa).

A run of 4 helical transmembrane segments spans residues 34 to 54 (FGSLLGICLITQILTGLLLAM), 78 to 99 (WLIRNLHANGASFFFICIYFHI), 114 to 134 (WNTGIILLLTLMATAFVGYVL), and 179 to 199 (FFALHFLLPFLIAGITLIHLT). Heme b-binding residues include histidine 84 and histidine 98. Residues histidine 183 and histidine 197 each coordinate heme b. Position 202 (histidine 202) interacts with a ubiquinone. 4 helical membrane-spanning segments follow: residues 227–247 (LKDILGFTLMLIPLLTLTFFS), 289–309 (LGGVLALAASVLILFLTPLLH), 321–341 (FSQVLFWLLVANLLILTWVGS), and 348–368 (FIAIGQMASFTYFLILLVLFP).

This sequence belongs to the cytochrome b family. In terms of assembly, the cytochrome bc1 complex contains 11 subunits: 3 respiratory subunits (MT-CYB, CYC1 and UQCRFS1), 2 core proteins (UQCRC1 and UQCRC2) and 6 low-molecular weight proteins (UQCRH/QCR6, UQCRB/QCR7, UQCRQ/QCR8, UQCR10/QCR9, UQCR11/QCR10 and a cleavage product of UQCRFS1). This cytochrome bc1 complex then forms a dimer. It depends on heme b as a cofactor.

The protein resides in the mitochondrion inner membrane. In terms of biological role, component of the ubiquinol-cytochrome c reductase complex (complex III or cytochrome b-c1 complex) that is part of the mitochondrial respiratory chain. The b-c1 complex mediates electron transfer from ubiquinol to cytochrome c. Contributes to the generation of a proton gradient across the mitochondrial membrane that is then used for ATP synthesis. The protein is Cytochrome b (MT-CYB) of Apteryx australis (Southern brown kiwi).